A 223-amino-acid chain; its full sequence is Deoxyribose-phosphate aldolase (223 aa).

The Proton donor/acceptor role is filled by Asp-91. Lys-153 serves as the catalytic Schiff-base intermediate with acetaldehyde. Lys-183 functions as the Proton donor/acceptor in the catalytic mechanism.

The protein belongs to the DeoC/FbaB aldolase family. DeoC type 1 subfamily.

Its subcellular location is the cytoplasm. It carries out the reaction 2-deoxy-D-ribose 5-phosphate = D-glyceraldehyde 3-phosphate + acetaldehyde. The protein operates within carbohydrate degradation; 2-deoxy-D-ribose 1-phosphate degradation; D-glyceraldehyde 3-phosphate and acetaldehyde from 2-deoxy-alpha-D-ribose 1-phosphate: step 2/2. In terms of biological role, catalyzes a reversible aldol reaction between acetaldehyde and D-glyceraldehyde 3-phosphate to generate 2-deoxy-D-ribose 5-phosphate. The protein is Deoxyribose-phosphate aldolase of Mycoplasmopsis synoviae (strain 53) (Mycoplasma synoviae).